The chain runs to 183 residues: Adenine phosphoribosyltransferase (183 aa).

The protein belongs to the purine/pyrimidine phosphoribosyltransferase family. Homodimer.

It localises to the cytoplasm. The enzyme catalyses AMP + diphosphate = 5-phospho-alpha-D-ribose 1-diphosphate + adenine. Its pathway is purine metabolism; AMP biosynthesis via salvage pathway; AMP from adenine: step 1/1. Catalyzes a salvage reaction resulting in the formation of AMP, that is energically less costly than de novo synthesis. The chain is Adenine phosphoribosyltransferase from Salmonella heidelberg (strain SL476).